The primary structure comprises 716 residues: MWTLALWAFSFLCKFSLAVLPTKPENISCVFYFDRNLTCTWRPEKETNDTSYIVTLTYSYGKSNYSDNATEASYSFPRSCAMPPDICSVEVQAQNGDGKVKSDITYWHLISIAKTEPPIILSVNPICNRMFQIQWKPREKTRGFPLVCMLRFRTVNSSHWTEVNFENCKQVCNLTGLQAFTEYVLALRFRFNDSRYWSKWSKEETRVTMEEVPHVLDLWRILEPADMNGDRKVRLLWKKARGAPVLEKTFGYHIQYFAENSTNLTEINNITTQQYELLLMSQAHSVSVTSFNSLGKSQEAILRIPDVHEKTFQYIKSMKAYIAEPLLVVNWQSSIPAVDTWIVEWLPEAAMSKFPALSWESVSQVTNWTIEQDKLKPFTCYNISVYPVLGHRVGEPYSIQAYAKEGTPLKGPETRVENIGLRTATITWKEIPKSARNGFINNYTVFYQAEGGKELSKTVNSHALQCDLESLTRRTSYTVWVMASTRAGGTNGVRINFKTLSISVFEIVLLTSLVGGGLLLLSIKTVTFGLRKPNRLTPLCCPDVPNPAESSLATWLGDGFKKSNMKETGNSGDTEDVVLKPCPVPADLIDKLVVNFENFLEVVLTEEAGKGQASILGGEANEYVTSPSRPDGPPGKSFKEPSVLTEVASEDSHSTCSRMADEAYSELARQPSSSCQSPGLSPPREDQAQNPYLKNSVTTREFLVHENIPEHSKGEV.

Residues 1-18 (MWTLALWAFSFLCKFSLA) form the signal peptide. Over 19 to 499 (VLPTKPENIS…TNGVRINFKT (481 aa)) the chain is Extracellular. Fibronectin type-III domains are found at residues 23–115 (KPEN…IAKT), 117–211 (PPII…TMEE), 213–304 (PHVL…ILRI), 305–403 (PDVH…QAYA), and 408–502 (PLKG…TLSI). 3 N-linked (GlcNAc...) asparagine glycosylation sites follow: Asn-36, Asn-48, and Asn-64. The N-linked (GlcNAc...) asparagine glycan is linked to Asn-382. Residues 500–520 (LSISVFEIVLLTSLVGGGLLL) form a helical membrane-spanning segment. The Cytoplasmic segment spans residues 521-716 (LSIKTVTFGL…NIPEHSKGEV (196 aa)). Disordered stretches follow at residues 622–641 (EYVTSPSRPDGPPGKSFKEP) and 648–696 (ASED…LKNS). Over residues 670–679 (QPSSSCQSPG) the composition is skewed to polar residues.

Belongs to the type I cytokine receptor family. Type 2 subfamily. As to quaternary structure, heterodimer with OSMR. Interacts with JAK1 and STAT3. In terms of processing, N-glycosylated. Expressed in a subset of dorsal root ganglia neurons. Expressed in spinal cord and trigeminal ganglion (at protein level). Expressed in skin, testis, bone marrow and thymus.

The protein localises to the cell membrane. The protein resides in the presynaptic cell membrane. It localises to the cell projection. Its subcellular location is the axon. Functionally, associates with OSMR to form the interleukin-31 receptor which activates STAT3 and to a lower extent STAT1 and STAT5. May function in skin immunity. Mediates IL31-induced itch, probably in a manner dependent on cation channels TRPA1 and TRPV1. Positively regulates numbers and cycling status of immature subsets of myeloid progenitor cells in bone marrow in vivo and enhances myeloid progenitor cell survival in vitro. The sequence is that of Interleukin-31 receptor subunit alpha (Il31ra) from Mus musculus (Mouse).